The primary structure comprises 37 residues: Photosystem II reaction center protein Psb30 (37 aa).

Residues 10–30 (LISLLLLTLIMLAGPAVIALW) form a helical membrane-spanning segment.

It belongs to the Psb30/Ycf12 family. In terms of assembly, PSII is composed of 1 copy each of membrane proteins PsbA, PsbB, PsbC, PsbD, PsbE, PsbF, PsbH, PsbI, PsbJ, PsbK, PsbL, PsbM, PsbT, PsbX, Psb30/Ycf12, peripheral proteins PsbO, CyanoQ (PsbQ), PsbU, PsbV and a large number of cofactors. It forms dimeric complexes.

The protein resides in the cell inner membrane. Its function is as follows. A core subunit of photosystem II (PSII), probably helps stabilize the reaction center. The chain is Photosystem II reaction center protein Psb30 from Gloeobacter violaceus (strain ATCC 29082 / PCC 7421).